The sequence spans 358 residues: Trace amine-associated receptor 7h (358 aa).

The Extracellular portion of the chain corresponds to M1–R47. N34 is a glycosylation site (N-linked (GlcNAc...) asparagine). Intrachain disulfides connect C37–C201 and C120–C205. A helical membrane pass occupies residues L48 to V68. Over M69–N83 the chain is Cytoplasmic. The helical transmembrane segment at F84–S104 threads the bilayer. The Extracellular portion of the chain corresponds to M105–S125. A helical membrane pass occupies residues F126–V143. The Cytoplasmic portion of the chain corresponds to D144–K166. A helical membrane pass occupies residues C167–A187. Topologically, residues S188–N217 are extracellular. N210 carries an N-linked (GlcNAc...) asparagine glycan. A helical membrane pass occupies residues F218 to I238. The Cytoplasmic portion of the chain corresponds to A239–T274. The chain crosses the membrane as a helical span at residues L275–I295. Residues D296–E309 are Extracellular-facing. Residues I310–F333 traverse the membrane as a helical segment. At R334–E358 the chain is on the cytoplasmic side.

It belongs to the G-protein coupled receptor 1 family.

The protein localises to the cell membrane. Functionally, olfactory receptor specific for N,N-dimethylalkylamines trace amines. Trace amine compounds are enriched in animal body fluids and act on trace amine-associated receptors (TAARs) to elicit both intraspecific and interspecific innate behaviors. Ligand-binding causes a conformation change that triggers signaling via G(s)-class of G alpha proteins (GNAL or GNAS). In Rattus norvegicus (Rat), this protein is Trace amine-associated receptor 7h.